Here is a 159-residue protein sequence, read N- to C-terminus: Transcription elongation factor GreA (159 aa).

Belongs to the GreA/GreB family.

In terms of biological role, necessary for efficient RNA polymerase transcription elongation past template-encoded arresting sites. The arresting sites in DNA have the property of trapping a certain fraction of elongating RNA polymerases that pass through, resulting in locked ternary complexes. Cleavage of the nascent transcript by cleavage factors such as GreA or GreB allows the resumption of elongation from the new 3'terminus. GreA releases sequences of 2 to 3 nucleotides. The sequence is that of Transcription elongation factor GreA from Buchnera aphidicola subsp. Baizongia pistaciae (strain Bp).